The following is a 246-amino-acid chain: tRNA (guanine-N(1)-)-methyltransferase (246 aa).

Residues G114 and 134–139 (IGDYIL) each bind S-adenosyl-L-methionine. Over residues 219 to 231 (LRRPDLWERHEGA) the composition is skewed to basic and acidic residues. Residues 219-246 (LRRPDLWERHEGARAQSPSGARRQKKER) form a disordered region.

This sequence belongs to the RNA methyltransferase TrmD family. Homodimer.

It is found in the cytoplasm. The enzyme catalyses guanosine(37) in tRNA + S-adenosyl-L-methionine = N(1)-methylguanosine(37) in tRNA + S-adenosyl-L-homocysteine + H(+). Its function is as follows. Specifically methylates guanosine-37 in various tRNAs. The polypeptide is tRNA (guanine-N(1)-)-methyltransferase (Rhizorhabdus wittichii (strain DSM 6014 / CCUG 31198 / JCM 15750 / NBRC 105917 / EY 4224 / RW1) (Sphingomonas wittichii)).